A 404-amino-acid chain; its full sequence is Multidrug resistance protein MdtG (404 aa).

11 helical membrane-spanning segments follow: residues 19–39 (LGCF…PLYV), 56–76 (LVFS…GGLA), 90–110 (LGMA…QFLI), 113–133 (ALLG…ATQV), 144–164 (TLST…GLLA), 171–191 (PVFF…FFFI), 222–242 (LFVT…ILTL), 254–274 (IAFI…LSAP), 288–308 (ILIV…FVQT), 317–337 (FLLG…LVYN), and 376–396 (AVFC…WNSL).

It belongs to the major facilitator superfamily. DHA1 family. MdtG (TC 2.A.1.2.20) subfamily.

Its subcellular location is the cell inner membrane. In Salmonella choleraesuis (strain SC-B67), this protein is Multidrug resistance protein MdtG.